The sequence spans 508 residues: Rhamnogalacturonan I rhamnosyltransferase 1 (508 aa).

The chain crosses the membrane as a helical; Signal-anchor for type II membrane protein span at residues 41–63 (LWMIRAVTVLLLWSCFVHLMALG). N-linked (GlcNAc...) asparagine glycosylation is found at Asn136, Asn202, and Asn223. Substrate is bound at residue 277–279 (HLR). N-linked (GlcNAc...) asparagine glycosylation occurs at Asn391.

This sequence belongs to the glycosyltransferase GT106 family. As to expression, highly expressed in siliques. Expressed in stems and flowers. Expressed at low levels in roots and rosette leaves.

It is found in the golgi apparatus membrane. It catalyses the reaction alpha-D-galacturonosyl-[(1-&gt;2)-alpha-L-rhamnosyl-(1-&gt;4)-alpha-D-galacturonosyl](n) + UDP-beta-L-rhamnose = [(1-&gt;2)-alpha-L-rhamnosyl-(1-&gt;4)-alpha-D-galacturonosyl](n+1) + UDP + H(+). It participates in glycan metabolism; pectin biosynthesis. In terms of biological role, glycosyltransferase involved in the formation of rhamnogalacturonan I (RG-I) oligosaccharides in the seed coat mucilage, which is a specialized cell wall with abundant RG-I. Transfers the rhamnose residue from UDP-beta-L-rhamnose to RG-I oligosaccharides. Prefers RG-I oligosaccharides with a degree of polymerization of 5 or larger than 5. Does not act on oligosaccharides with a degree of polymerization of 4 or smaller than 4. Does not require metal ions for its activity. This Arabidopsis thaliana (Mouse-ear cress) protein is Rhamnogalacturonan I rhamnosyltransferase 1.